Reading from the N-terminus, the 394-residue chain is Elongation factor Tu 1 (394 aa).

Residues 10-204 form the tr-type G domain; the sequence is KPHVNVGTIG…FLDSYIPEPE (195 aa). Positions 19–26 are G1; sequence GHVDHGKT. Residue 19 to 26 coordinates GTP; that stretch reads GHVDHGKT. T26 contributes to the Mg(2+) binding site. Residues 60 to 64 are G2; the sequence is GITIN. The G3 stretch occupies residues 81-84; sequence DCPG. GTP is bound by residues 81-85 and 136-139; these read DCPGH and NKCD. Residues 136 to 139 are G4; it reads NKCD. The segment at 174-176 is G5; it reads SAL.

The protein belongs to the TRAFAC class translation factor GTPase superfamily. Classic translation factor GTPase family. EF-Tu/EF-1A subfamily. In terms of assembly, monomer.

It is found in the cytoplasm. The catalysed reaction is GTP + H2O = GDP + phosphate + H(+). GTP hydrolase that promotes the GTP-dependent binding of aminoacyl-tRNA to the A-site of ribosomes during protein biosynthesis. In Shigella sonnei (strain Ss046), this protein is Elongation factor Tu 1.